The primary structure comprises 208 residues: Cysteine-rich protein 2 (208 aa).

The LIM zinc-binding 1 domain occupies 5–57; the sequence is CPKCDKTVCFAEKVSSLGKDWHKFCLKCERCSKTLTPGGHAEHDGKPFCHKPC. Lys23 bears the N6-acetyllysine mark. The disordered stretch occupies residues 98-119; sequence AEERKASGPPKGPSRASSVTTF. Ser104 carries the post-translational modification Phosphoserine. One can recognise an LIM zinc-binding 2 domain in the interval 126-178; it reads CPRCSKKVYFAEKVTSLGKDWHRPCLHCERCGKTLTPGGHAEHDGQPYCHKPC. Lys138 and Lys144 each carry N6-acetyllysine.

As to quaternary structure, interacts with TGFB1I1.

The chain is Cysteine-rich protein 2 (CRIP2) from Pongo abelii (Sumatran orangutan).